We begin with the raw amino-acid sequence, 635 residues long: Threonine--tRNA ligase (635 aa).

The 61-residue stretch at 1–61 (MIAITLPDGS…DRDAELAIVT (61 aa)) folds into the TGS domain. Positions 242-533 (DHRKLGKTLD…LLENHAGALP (292 aa)) are catalytic. Zn(2+) is bound by residues C333, H384, and H510.

It belongs to the class-II aminoacyl-tRNA synthetase family. In terms of assembly, homodimer. It depends on Zn(2+) as a cofactor.

The protein resides in the cytoplasm. It catalyses the reaction tRNA(Thr) + L-threonine + ATP = L-threonyl-tRNA(Thr) + AMP + diphosphate + H(+). Functionally, catalyzes the attachment of threonine to tRNA(Thr) in a two-step reaction: L-threonine is first activated by ATP to form Thr-AMP and then transferred to the acceptor end of tRNA(Thr). Also edits incorrectly charged L-seryl-tRNA(Thr). The polypeptide is Threonine--tRNA ligase (Cupriavidus necator (strain ATCC 17699 / DSM 428 / KCTC 22496 / NCIMB 10442 / H16 / Stanier 337) (Ralstonia eutropha)).